We begin with the raw amino-acid sequence, 418 residues long: Glucose-1-phosphate adenylyltransferase (418 aa).

Alpha-D-glucose 1-phosphate-binding positions include tyrosine 104, glycine 169, 184–185, and serine 202; that span reads EK.

It belongs to the bacterial/plant glucose-1-phosphate adenylyltransferase family. In terms of assembly, homotetramer.

The enzyme catalyses alpha-D-glucose 1-phosphate + ATP + H(+) = ADP-alpha-D-glucose + diphosphate. The protein operates within glycan biosynthesis; glycogen biosynthesis. Involved in the biosynthesis of ADP-glucose, a building block required for the elongation reactions to produce glycogen. Catalyzes the reaction between ATP and alpha-D-glucose 1-phosphate (G1P) to produce pyrophosphate and ADP-Glc. This Jannaschia sp. (strain CCS1) protein is Glucose-1-phosphate adenylyltransferase.